Here is a 350-residue protein sequence, read N- to C-terminus: Neuronal-specific septin-3 (350 aa).

Residues 1-10 (MSKGLPEART) show a composition bias toward basic and acidic residues. The interval 1 to 29 (MSKGLPEARTDAAMSELVPEPRPKPAVPM) is disordered. Positions 58 to 331 (TGFDFNIMVV…ETYRAKRLND (274 aa)) constitute a Septin-type G domain. A G1 motif region spans residues 68–75 (GQSGLGKS). 68 to 75 (GQSGLGKS) serves as a coordination point for GTP. Serine 91 carries the post-translational modification Phosphoserine. Threonine 102 contributes to the GTP binding site. Residues 125–128 (DTPG) form a G3 motif region. Residues 207–210 (AKAD) are G4 motif. GTP contacts are provided by residues 208-216 (KADTMTLEE), glycine 265, and arginine 280. The disordered stretch occupies residues 328–350 (RLNDNGGLPPVSVDTEESHDSNP).

Belongs to the TRAFAC class TrmE-Era-EngA-EngB-Septin-like GTPase superfamily. Septin GTPase family. In terms of assembly, septins polymerize into heterooligomeric protein complexes that form filaments, and can associate with cellular membranes, actin filaments and microtubules. GTPase activity is required for filament formation. Post-translationally, phosphorylated by PKG on serine residues. Phosphorylated by PKG on Ser-91. In terms of tissue distribution, expressed in the brain including the cerebrum, hippocampus and cerebellum (at protein level).

The protein resides in the cytoplasm. Its subcellular location is the cytoskeleton. The protein localises to the synapse. Filament-forming cytoskeletal GTPase. May play a role in cytokinesis (Potential). The protein is Neuronal-specific septin-3 of Mus musculus (Mouse).